The chain runs to 546 residues: Zinc finger and BTB domain-containing protein 7A (546 aa).

The BTB domain occupies 34-101 (CDVVILVEGQ…AYTATLTVST (68 aa)). A disordered region spans residues 189–288 (QEDEEEPDCN…SFVPTGAEAE (100 aa)). 3 consecutive C2H2-type zinc fingers follow at residues 359-381 (QKCP…IRTH), 387-409 (YECN…MRKH), and 415-437 (YLCQ…MRVH). Residues 443 to 467 (YQCDSCFKTFVRSDHLHRHLKKDGC) form a C2H2-type 4; atypical zinc finger. The segment at 463-546 (KKDGCNGIPS…AAEGSAPGPS (84 aa)) is disordered. Over residues 534-546 (AGGAAEGSAPGPS) the composition is skewed to low complexity.

It is found in the nucleus. Transcription factor that represses the transcription of a wide range of genes involved in cell proliferation and differentiation. Directly and specifically binds to the consensus sequence 5'-[GA][CA]GACCCCCCCCC-3' and represses transcription both by regulating the organization of chromatin and through the direct recruitment of transcription factors to gene regulatory regions. May also play a role, independently of its transcriptional activity, in double-strand break repair via classical non-homologous end joining/cNHEJ and in alternative splicing. The protein is Zinc finger and BTB domain-containing protein 7A of Gallus gallus (Chicken).